A 274-amino-acid chain; its full sequence is Elongation factor Ts (274 aa).

Residues 82-85 form an involved in Mg(2+) ion dislocation from EF-Tu region; the sequence is TDFV.

It belongs to the EF-Ts family.

Its subcellular location is the cytoplasm. Associates with the EF-Tu.GDP complex and induces the exchange of GDP to GTP. It remains bound to the aminoacyl-tRNA.EF-Tu.GTP complex up to the GTP hydrolysis stage on the ribosome. This is Elongation factor Ts from Christiangramia forsetii (strain DSM 17595 / CGMCC 1.15422 / KT0803) (Gramella forsetii).